A 521-amino-acid chain; its full sequence is Acidic amino acid decarboxylase GADL1 (521 aa).

The span at 1–12 (MSLLPDRERAPD) shows a compositional bias: basic and acidic residues. The disordered stretch occupies residues 1–20 (MSLLPDRERAPDGDISPQEM). The residue at position 333 (Lys333) is an N6-(pyridoxal phosphate)lysine.

It belongs to the group II decarboxylase family. Homodimer. It depends on pyridoxal 5'-phosphate as a cofactor. As to expression, expressed at highest levels in skeletal muscles. Also detected heart, spleen and rumen.

It catalyses the reaction L-aspartate + H(+) = beta-alanine + CO2. The enzyme catalyses 3-sulfino-L-alanine + H(+) = hypotaurine + CO2. The catalysed reaction is L-cysteate + H(+) = taurine + CO2. Functionally, catalyzes the decarboxylation of L-aspartate, 3-sulfino-L-alanine (cysteine sulfinic acid), and L-cysteate to beta-alanine, hypotaurine and taurine, respectively. The preferred substrate is L-aspartate. Does not exhibit any decarboxylation activity toward glutamate. The protein is Acidic amino acid decarboxylase GADL1 (GADL1) of Bos taurus (Bovine).